Reading from the N-terminus, the 628-residue chain is tRNA (carboxymethyluridine(34)-5-O)-methyltransferase alkbh8 (628 aa).

Residues glutamine 43–lysine 123 enclose the RRM domain. One can recognise a Fe2OG dioxygenase domain in the interval aspartate 218–arginine 335. Position 225–227 (asparagine 225–tyrosine 227) interacts with 2-oxoglutarate. The Fe cation site is built by histidine 236 and aspartate 238. Histidine 240 is a Zn(2+) binding site. Histidine 290 serves as a coordination point for Fe cation. 2-oxoglutarate contacts are provided by arginine 326 and arginine 332. 3 residues coordinate Zn(2+): cysteine 339, cysteine 341, and cysteine 347. Residues alanine 410 to leucine 628 are methyltransferase domain. The disordered stretch occupies residues proline 563–glycine 582. The segment covering valine 569–glycine 582 has biased composition (basic and acidic residues).

This sequence belongs to the alkB family. The cofactor is Fe(2+).

It localises to the cytoplasm. The protein localises to the nucleus. The catalysed reaction is 5-(carboxymethyl)uridine(34) in tRNA + S-adenosyl-L-methionine = 5-(2-methoxy-2-oxoethyl)uridine(34) in tRNA + S-adenosyl-L-homocysteine. Functionally, catalyzes the methylation of 5-carboxymethyl uridine to 5-methylcarboxymethyl uridine at the wobble position of the anticodon loop in tRNA via its methyltransferase domain. Catalyzes the last step in the formation of 5-methylcarboxymethyl uridine at the wobble position of the anticodon loop in target tRNA. Has a preference for tRNA(Arg) and tRNA(Glu), and does not bind tRNA(Lys). Binds tRNA and catalyzes the iron and alpha-ketoglutarate dependent hydroxylation of 5-methylcarboxymethyl uridine at the wobble position of the anticodon loop in tRNA via its dioxygenase domain, giving rise to 5-(S)-methoxycarbonylhydroxymethyluridine; has a preference for tRNA(Gly). Required for normal survival after DNA damage. May inhibit apoptosis and promote cell survival and angiogenesis. This chain is tRNA (carboxymethyluridine(34)-5-O)-methyltransferase alkbh8 (alkbh8), found in Xenopus tropicalis (Western clawed frog).